We begin with the raw amino-acid sequence, 426 residues long: Actin-like protein 6B (426 aa).

Residues 39–82 (TTVGLLAAEEGGGLELEGDKEKKGKIFHIDTNALHVPRDGAEVM) form an essential for mediating its function in dendritic development; may contribute to neuronal-specific targeting region.

This sequence belongs to the actin family. Component of the multiprotein chromatin-remodeling complexes SWI/SNF: SWI/SNF-A (BAF), SWI/SNF-B (PBAF) and related complexes. The canonical complex contains a catalytic subunit (either SMARCA4/BRG1/BAF190A or SMARCA2/BRM/BAF190B) and at least SMARCE1, ACTL6A/BAF53, SMARCC1/BAF155, SMARCC2/BAF170 and SMARCB1/SNF5/BAF47. Other subunits specific to each of the complexes may also be present permitting several possible combinations developmentally and tissue specific. Component of the BAF complex, which includes at least actin (ACTB), ARID1A/BAF250A, ARID1B/BAF250B, SMARCA2/BRM, SMARCA4/BRG1/BAF190A, ACTL6A/BAF53, ACTL6B/BAF53B, SMARCE1/BAF57, SMARCC1/BAF155, SMARCC2/BAF170, SMARCB1/SNF5/INI1 and one or more SMARCD1/BAF60A, SMARCD2/BAF60B, or SMARCD3/BAF60C. Component of neuron-specific chromatin remodeling complex (nBAF complex) composed of at least, ARID1A/BAF250A or ARID1B/BAF250B, SMARCD1/BAF60A or SMARCD2/BAF60B or SMARCD3/BAF60C, SMARCA2/BRM/BAF190B, SMARCA4/BRG1/BAF190A, SMARCB1/BAF47, SMARCC1/BAF155, SMARCE1/BAF57, SMARCC2/BAF170, DPF1/BAF45B, DPF3/BAF45C, ACTL6B/BAF53B and actin (ACTB). Note that the nBAF complex is polymorphic in regard to the ATPase, SMARCA2 and SMARCA4 occupying mutually exclusive positions. May be a component of the SWI/SNF-B (PBAF) chromatin remodeling complex, at least composed of SMARCA4/BRG1, SMARCB1/BAF47/SNF5, ACTL6A/BAF53A or ACTL6B/BAF53B, SMARCE1/BAF57, SMARCD1/BAF60A, SMARCD2/BAF60B, perhaps SMARCD3/BAF60C, SMARCC1/BAF155, SMARCC2/BAF170, PBRM1/BAF180, ARID2/BAF200 and actin.

Its subcellular location is the nucleus. Involved in transcriptional activation and repression of select genes by chromatin remodeling (alteration of DNA-nucleosome topology). Component of SWI/SNF chromatin remodeling complexes that carry out key enzymatic activities, changing chromatin structure by altering DNA-histone contacts within a nucleosome in an ATP-dependent manner. Belongs to the neuron-specific chromatin remodeling complex (nBAF complex), as such plays a role in remodeling mononucleosomes in an ATP-dependent fashion, and is required for postmitotic neural development and dendritic outgrowth. During neural development a switch from a stem/progenitor to a postmitotic chromatin remodeling mechanism occurs as neurons exit the cell cycle and become committed to their adult state. The transition from proliferating neural stem/progenitor cells to postmitotic neurons requires a switch in subunit composition of the npBAF and nBAF complexes. As neural progenitors exit mitosis and differentiate into neurons, npBAF complexes which contain ACTL6A/BAF53A and PHF10/BAF45A, are exchanged for homologous alternative ACTL6B/BAF53B and DPF1/BAF45B or DPF3/BAF45C subunits in neuron-specific complexes (nBAF). The npBAF complex is essential for the self-renewal/proliferative capacity of the multipotent neural stem cells. The nBAF complex along with CREST plays a role regulating the activity of genes essential for dendrite growth. ACTL6B/BAF53B is not essential for assembly of the nBAF complex but is required for targeting the complex and CREST to the promoter of genes essential for dendritic growth. Essential for neuronal maturation and dendrite development. The polypeptide is Actin-like protein 6B (Homo sapiens (Human)).